Reading from the N-terminus, the 995-residue chain is S1 RNA-binding domain-containing protein 1 (995 aa).

The segment at 23–78 is disordered; it reads SFSELSSASEEDDKEDSAWEPQKKVPRSRKQPPPKESKPKRMPQVKKNAPQISDGS. Residue K84 forms a Glycyl lysine isopeptide (Lys-Gly) (interchain with G-Cter in SUMO2) linkage. Over residues 116 to 132 the composition is skewed to basic residues; it reads TKRKCAAQPHAVRRTKK. The interval 116-164 is disordered; sequence TKRKCAAQPHAVRRTKKLKVDEETSKASYLEGESNSSETPSTSTVWGGT. K134 participates in a covalent cross-link: Glycyl lysine isopeptide (Lys-Gly) (interchain with G-Cter in SUMO2). Over residues 146 to 159 the composition is skewed to low complexity; that stretch reads EGESNSSETPSTST. Residues K166, K167, and K183 each participate in a glycyl lysine isopeptide (Lys-Gly) (interchain with G-Cter in SUMO2) cross-link. K185 participates in a covalent cross-link: Glycyl lysine isopeptide (Lys-Gly) (interchain with G-Cter in SUMO1); alternate. K185 participates in a covalent cross-link: Glycyl lysine isopeptide (Lys-Gly) (interchain with G-Cter in SUMO2); alternate. Residues 258-288 adopt a coiled-coil conformation; the sequence is ADSLREVQQTLEELRAVAKKVHSTIQKIKKE. S861 carries the phosphoserine modification. Positions 919 to 992 constitute an S1 motif domain; sequence GTVLTGKVEN…PRSRITLDLI (74 aa). K955 is covalently cross-linked (Glycyl lysine isopeptide (Lys-Gly) (interchain with G-Cter in SUMO2)). S964 bears the Phosphoserine mark.

The sequence is that of S1 RNA-binding domain-containing protein 1 (SRBD1) from Pongo abelii (Sumatran orangutan).